The chain runs to 628 residues: Voltage-gated potassium channel KCNC4 (628 aa).

2 disordered regions span residues 1-24 and 62-88; these read MISS…SKTC and LAWL…GSSG. The interval 1–28 is inactivation gate; it reads MISSVCVSSYRGRKSGNKPPSKTCLKEE. At 1 to 230 the chain is on the cytoplasmic side; it reads MISSVCVSSY…EDPYSSRAAR (230 aa). A phosphoserine mark is found at Ser-8, Ser-9, Ser-15, and Ser-21. A compositionally biased stretch (gly residues) spans 77 to 88; sequence DGGGAGSSGSSG. His-120, Cys-126, Cys-147, and Cys-148 together coordinate Zn(2+). A helical transmembrane segment spans residues 231-251; sequence VVAFASLFFILVSITTFCLET. N-linked (GlcNAc...) asparagine glycans are attached at residues Asn-260 and Asn-269. A helical transmembrane segment spans residues 282–302; the sequence is EPILTYIEGVCVMWFTLEFLV. The Cytoplasmic segment spans residues 303-316; sequence RIVCCPDTLDFVKN. A helical membrane pass occupies residues 317–337; sequence LLNIIDFVAILPFYLEVGLSG. The helical; Voltage-sensor transmembrane segment at 349–368 threads the bilayer; that stretch reads FLRVVRFVRILRIFKLTRHF. Residues 369–384 lie on the Cytoplasmic side of the membrane; that stretch reads VGLRVLGHTLRASTNE. Residues 385 to 405 form a helical membrane-spanning segment; sequence FLLLIIFLALGVLIFATMIYY. K(+) is bound by residues Thr-440, Leu-441, Gly-442, and Tyr-443. The short motif at 440 to 445 is the Selectivity filter element; sequence TLGYGD. A helical membrane pass occupies residues 456–476; that stretch reads VGALCALAGVLTIAMPVPVIV. The Cytoplasmic segment spans residues 477–628; it reads NNFGMYYSLA…CVPVSHTCAL (152 aa). Residues 493-584 form a disordered region; the sequence is PKKRKKHVPR…RRALRRSGTR (92 aa). Basic and acidic residues predominate over residues 531–546; it reads AREEGVVERKRADSKQ.

The protein belongs to the potassium channel family. C (Shaw) (TC 1.A.1.2) subfamily. Kv3.4/KCNC4 sub-subfamily. In terms of assembly, homotetramer. Heterotetramer of potassium channel proteins. Post-translationally, phosphorylation of serine residues in the inactivation gate inhibits rapid channel closure.

It is found in the membrane. It catalyses the reaction K(+)(in) = K(+)(out). Its function is as follows. Voltage-gated potassium channel that opens in response to the voltage difference across the membrane, forming a potassium-selective channel through which potassium ions pass in accordance with their electrochemical gradient. The channel displays rapid activation and inactivation kinetics. The chain is Voltage-gated potassium channel KCNC4 from Mus musculus (Mouse).